The chain runs to 143 residues: Large ribosomal subunit protein uL16 (143 aa).

This sequence belongs to the universal ribosomal protein uL16 family. In terms of assembly, part of the 50S ribosomal subunit.

In terms of biological role, binds 23S rRNA and is also seen to make contacts with the A and possibly P site tRNAs. The sequence is that of Large ribosomal subunit protein uL16 from Oenococcus oeni (strain ATCC BAA-331 / PSU-1).